The following is a 44-amino-acid chain: Conotoxin Fi11.11 (44 aa).

4 disulfide bridges follow: Cys-1–Cys-15, Cys-8–Cys-20, Cys-14–Cys-24, and Cys-19–Cys-28. Asparagine amide is present on Asn-30. Residues 35 to 44 (QVPLKSFGQR) constitute a propeptide that is removed on maturation.

This sequence belongs to the conotoxin I2 superfamily. In terms of tissue distribution, expressed by the venom duct.

The protein localises to the secreted. The polypeptide is Conotoxin Fi11.11 (Conus figulinus (Fig cone)).